The sequence spans 283 residues: NAD kinase (283 aa).

Catalysis depends on Asp-73, which acts as the Proton acceptor. NAD(+) is bound by residues 73–74 (DG), 146–147 (NE), His-157, His-176, Asp-178, 189–194 (TAYNLS), and Ala-213.

The protein belongs to the NAD kinase family. A divalent metal cation serves as cofactor.

It localises to the cytoplasm. The enzyme catalyses NAD(+) + ATP = ADP + NADP(+) + H(+). Involved in the regulation of the intracellular balance of NAD and NADP, and is a key enzyme in the biosynthesis of NADP. Catalyzes specifically the phosphorylation on 2'-hydroxyl of the adenosine moiety of NAD to yield NADP. This chain is NAD kinase, found in Haloarcula marismortui (strain ATCC 43049 / DSM 3752 / JCM 8966 / VKM B-1809) (Halobacterium marismortui).